Reading from the N-terminus, the 413-residue chain is Histidine--tRNA ligase (413 aa).

Belongs to the class-II aminoacyl-tRNA synthetase family. Homodimer.

The protein resides in the cytoplasm. It carries out the reaction tRNA(His) + L-histidine + ATP = L-histidyl-tRNA(His) + AMP + diphosphate + H(+). This Geobacter sulfurreducens (strain ATCC 51573 / DSM 12127 / PCA) protein is Histidine--tRNA ligase.